Here is an 886-residue protein sequence, read N- to C-terminus: Alanine--tRNA ligase (886 aa).

The Zn(2+) site is built by His564, His568, Cys676, and His680.

The protein belongs to the class-II aminoacyl-tRNA synthetase family. Zn(2+) serves as cofactor.

It localises to the cytoplasm. The catalysed reaction is tRNA(Ala) + L-alanine + ATP = L-alanyl-tRNA(Ala) + AMP + diphosphate. Its function is as follows. Catalyzes the attachment of alanine to tRNA(Ala) in a two-step reaction: alanine is first activated by ATP to form Ala-AMP and then transferred to the acceptor end of tRNA(Ala). Also edits incorrectly charged Ser-tRNA(Ala) and Gly-tRNA(Ala) via its editing domain. The sequence is that of Alanine--tRNA ligase from Methylobacterium sp. (strain 4-46).